The following is a 72-amino-acid chain: UPF0270 protein YheU (72 aa).

It belongs to the UPF0270 family.

The chain is UPF0270 protein YheU from Escherichia coli (strain UTI89 / UPEC).